Here is an 88-residue protein sequence, read N- to C-terminus: Large ribosomal subunit protein bL27 (88 aa).

The segment at 1-21 (MAHKKGASSSRNGRDSAAQRL) is disordered.

It belongs to the bacterial ribosomal protein bL27 family.

The polypeptide is Large ribosomal subunit protein bL27 (Mycobacterium avium (strain 104)).